The following is an 824-amino-acid chain: Silver exporting P-type ATPase (824 aa).

The interval 89-112 (ASEHHHHHDHHEVSPDKIKQSHRQ) is disordered. Basic and acidic residues predominate over residues 98 to 112 (HHEVSPDKIKQSHRQ). A run of 6 helical transmembrane segments spans residues 167–187 (FWLG…SHLF), 200–220 (TWLQ…PFFA), 234–254 (FTLV…ATVF), 268–288 (LVAI…LGQV), 427–447 (WFVP…SVWG), and 455–475 (GLIA…GLAT). Catalysis depends on aspartate 511, which acts as the 4-aspartylphosphate intermediate. Transmembrane regions (helical) follow at residues 764–784 (IRQN…VAAG) and 785–805 (LLYP…AMAL).

It belongs to the cation transport ATPase (P-type) (TC 3.A.3) family. Type IB subfamily.

Its subcellular location is the cell membrane. The enzyme catalyses Ag(+)(in) + ATP + H2O = Ag(+)(out) + ADP + phosphate + H(+). In terms of biological role, component of the sil cation-efflux system that confers resistance to silver. The protein is Silver exporting P-type ATPase (silP) of Salmonella typhimurium.